Reading from the N-terminus, the 479-residue chain is Poly(A) polymerase catalytic subunit (479 aa).

Catalysis depends on residues Asp-202 and Asp-204. Residues Asp-202, Asp-204, and Asp-253 each contribute to the Ca(2+) site.

It belongs to the poxviridae poly(A) polymerase catalytic subunit family. Heterodimer of a large (catalytic) subunit and a small (regulatory) subunit.

The catalysed reaction is RNA(n) + ATP = RNA(n)-3'-adenine ribonucleotide + diphosphate. In terms of biological role, polymerase that creates the 3'-poly(A) tail of mRNA's. This chain is Poly(A) polymerase catalytic subunit (OPG063), found in Mus musculus (Mouse).